We begin with the raw amino-acid sequence, 591 residues long: Aspartate--tRNA(Asp/Asn) ligase (591 aa).

Residue E175 coordinates L-aspartate. Positions 199–202 (QQFK) are aspartate. L-aspartate-binding residues include R221 and H453. Position 221–223 (221–223 (RDE)) interacts with ATP. E486 serves as a coordination point for ATP. L-aspartate is bound at residue R493. Residue 538 to 541 (GIDR) participates in ATP binding.

This sequence belongs to the class-II aminoacyl-tRNA synthetase family. Type 1 subfamily. Homodimer.

Its subcellular location is the cytoplasm. It catalyses the reaction tRNA(Asx) + L-aspartate + ATP = L-aspartyl-tRNA(Asx) + AMP + diphosphate. Its function is as follows. Aspartyl-tRNA synthetase with relaxed tRNA specificity since it is able to aspartylate not only its cognate tRNA(Asp) but also tRNA(Asn). Reaction proceeds in two steps: L-aspartate is first activated by ATP to form Asp-AMP and then transferred to the acceptor end of tRNA(Asp/Asn). The polypeptide is Aspartate--tRNA(Asp/Asn) ligase (Jannaschia sp. (strain CCS1)).